The following is a 350-amino-acid chain: MKKIKVLCVDDSALVRGLMTEIINSHPDMEVVATAPDPLVARELIKKHNPDVLTLDVEMPRMDGLDFLEKLMRLRPMPVVMVSSLTERGGEITLRALELGAIDFVTKPKLGIRDGLIEYSEVIADKIRAASRARLRAPAPAGHAAPLRLRSPFASSEKLVIVGASTGGTEAIREVLQPLPADSPAILITQHMPAGFTRSFAQRLDALCAVTVREASDGERVLPGHVYLAPGGETHMRLGRSGANYVIGLQASEPVNRHRPSVDVLFHSAAEAAGGNAIGVILTGMGKDGAAGLLAMKRAGARTMAQDEASCVVFGMPREAIALGAADEVVPLADISERILTRLGDRGHRV.

One can recognise a Response regulatory domain in the interval 5-122 (KVLCVDDSAL…RDGLIEYSEV (118 aa)). Asp-56 is modified (4-aspartylphosphate). The CheB-type methylesterase domain occupies 152–346 (PFASSEKLVI…ERILTRLGDR (195 aa)). Catalysis depends on residues Ser-165, His-191, and Asp-288.

It belongs to the CheB family. Post-translationally, phosphorylated by CheA. Phosphorylation of the N-terminal regulatory domain activates the methylesterase activity.

The protein resides in the cytoplasm. The catalysed reaction is [protein]-L-glutamate 5-O-methyl ester + H2O = L-glutamyl-[protein] + methanol + H(+). It carries out the reaction L-glutaminyl-[protein] + H2O = L-glutamyl-[protein] + NH4(+). Its function is as follows. Involved in chemotaxis. Part of a chemotaxis signal transduction system that modulates chemotaxis in response to various stimuli. Catalyzes the demethylation of specific methylglutamate residues introduced into the chemoreceptors (methyl-accepting chemotaxis proteins or MCP) by CheR. Also mediates the irreversible deamidation of specific glutamine residues to glutamic acid. The polypeptide is Protein-glutamate methylesterase/protein-glutamine glutaminase (Bordetella bronchiseptica (strain ATCC BAA-588 / NCTC 13252 / RB50) (Alcaligenes bronchisepticus)).